A 1201-amino-acid polypeptide reads, in one-letter code: Zinc finger protein sdc-1 (1201 aa).

7 consecutive C2H2-type zinc fingers follow at residues 117 to 139, 145 to 168, 233 to 254, 268 to 290, 486 to 513, 521 to 543, and 652 to 674; these read LTCA…RGVH, YMCQ…RTSC, SSCH…GNVH, YFCH…WRLH, IVCH…LLRH, YHCA…INDC, and VVCF…DYCH. The interval 1164-1201 is disordered; it reads KRRNSETREHELIELDTDDLNEPSTSDGRYSFGHHGYR. The segment covering 1167–1176 has biased composition (basic and acidic residues); that stretch reads NSETREHELI.

Component of the SDC complex, which consists of sdc-1, sdc-2 and sdc-3. Within the complex, interacts with sdc-2 and sdc-3.

It is found in the nucleus. The protein resides in the chromosome. Its function is as follows. Embryonic transcription factor regulating downstream genes involved specifically in the sex determination and dosage compensation pathways, or regulating other genes involved in the coordinate control of both processes. Component of the SDC complex that functions in sex determination and in X chromosome dosage compensation specifically in hermaphrodite (XX) animals. Involved in the recruitment of the condensin I-like dosage compensation complex to the male sex-determining autosomal gene her-1, thereby contributing to its repression and initiating hermaphrodite sexual development. Similarly, might contribute to X-linked gene repression through recruitment of the dosage compensation complex to the X chromosomes in hermaphrodites. Seems to be involved in the depletion of histone H4 lysine 16 acetylation (H4K16ac) on dosage compensated X chromosomes. Plays a role in developmental rate and body fat regulation downstream of the TOR complex 2 pathway. This chain is Zinc finger protein sdc-1 (sdc-1), found in Caenorhabditis elegans.